The following is a 660-amino-acid chain: Pentatricopeptide repeat-containing protein At4g20090 (660 aa).

PPR repeat units lie at residues 76-110 (GDST…NRVI), 111-141 (IERS…MVDE), 147-181 (SVKS…NMNM), 186-220 (NGLS…KCLP), 221-255 (DGYT…GCSP), 256-290 (SPVI…GCVP), 291-325 (NEVT…KCIP), 326-360 (NDVT…GYHL), 361-395 (NQHI…GCKP), 396-430 (NIVV…GCLP), 431-465 (NAYT…GCSR), 466-500 (NKFC…GIKP), 501-535 (DTVA…EEPK), 539-573 (DVVT…GCDP), and 574-609 (DVIT…LLKR).

The protein belongs to the PPR family. P subfamily.

Functionally, may play a role in embryogenesis. In Arabidopsis thaliana (Mouse-ear cress), this protein is Pentatricopeptide repeat-containing protein At4g20090 (EMB1025).